We begin with the raw amino-acid sequence, 194 residues long: Casparian strip membrane protein 2 (194 aa).

Residues 1 to 32 (MSTTIDIPESSKVVKGKGVVAAPLRPGGWKKG) lie on the Cytoplasmic side of the membrane. A helical transmembrane segment spans residues 33-53 (VAIMDFILRLGAIAAALGAAA). The Extracellular portion of the chain corresponds to 54–82 (TMGTSDQTLPFFTQFFQFEASYDSFTTFQ). Residues 83–103 (FFVITMALVGGYLVLSLPFSV) traverse the membrane as a helical segment. Topologically, residues 104-115 (VAIIRPHAVGPR) are cytoplasmic. Residues 116–136 (LFLIILDTVFLTLATASAASA) form a helical membrane-spanning segment. Over 137–168 (AAVVYLAHNGDQDTNWLAICNQFGDFCAQTSS) the chain is Extracellular. A helical transmembrane segment spans residues 169 to 189 (AVVSSFVAVVVFVLLIVMSAL). Over 190–194 (AMGKP) the chain is Cytoplasmic.

The protein belongs to the Casparian strip membrane proteins (CASP) family. As to quaternary structure, homodimer and heterodimers.

Its subcellular location is the cell membrane. In terms of biological role, regulates membrane-cell wall junctions and localized cell wall deposition. Required for establishment of the Casparian strip membrane domain (CSD) and the subsequent formation of Casparian strips, a cell wall modification of the root endodermis that determines an apoplastic barrier between the intraorganismal apoplasm and the extraorganismal apoplasm and prevents lateral diffusion. The polypeptide is Casparian strip membrane protein 2 (Vigna unguiculata (Cowpea)).